Reading from the N-terminus, the 359-residue chain is MQAATVLINRRALRHNLQRLRELAPASKLVAVVKANAYGHGLIETARTLPDADAFGVARLEEALRLRAGGITRPILLLEGFFEADDLPTISAEHLHTAVHNEEQLVALENAELKEPVTVWMKLDTGMHRLGVLPEQAEAFYQRLSQCKNVRQPVNIVSHFARADEPQSGATEKQLDIFNTFCEGKPGQRSIAASGGILLWPQSHFDWARPGIILYGVSPLEDGTTGADFGCQPVMSLTSSLIAVREHKAGEPVGYGGTWVSERDTRLGVVAMGYGDGYPRAAPSGTPVLVNGREVPIVGRVAMDMICVDLGPQAQDKAGDPVILWGEGLPVERIAEMTKVSAYELITRLTSRVAMKYVD.

Residue Lys-34 is the Proton acceptor; specific for D-alanine of the active site. N6-(pyridoxal phosphate)lysine is present on Lys-34. Arg-129 contacts substrate. The active-site Proton acceptor; specific for L-alanine is Tyr-255. Met-303 serves as a coordination point for substrate.

It belongs to the alanine racemase family. Pyridoxal 5'-phosphate is required as a cofactor.

It carries out the reaction L-alanine = D-alanine. It participates in amino-acid biosynthesis; D-alanine biosynthesis; D-alanine from L-alanine: step 1/1. Its pathway is cell wall biogenesis; peptidoglycan biosynthesis. Functionally, catalyzes the interconversion of L-alanine and D-alanine. Provides the D-alanine required for cell wall biosynthesis. The chain is Alanine racemase, biosynthetic (alr) from Escherichia coli O6:H1 (strain CFT073 / ATCC 700928 / UPEC).